Consider the following 375-residue polypeptide: cAMP-dependent protein kinase regulatory subunit (375 aa).

The interval 28 to 142 is dimerization and phosphorylation; sequence RFCADYFNER…SLYKSVSHNF (115 aa). Residues 41-50 are compositionally biased toward basic and acidic residues; that stretch reads REEADDDGPR. A disordered region spans residues 41-102; that stretch reads REEADDDGPR…EPAAPFTRRT (62 aa). The segment covering 64–82 has biased composition (polar residues); sequence GSSSRSTDGSLFRSSFADT. Low complexity predominate over residues 83–97; that stretch reads SSEGPGSASSEPAAP. A Phosphoserine modification is found at Ser103. 3',5'-cyclic AMP contacts are provided by residues 143–258, Glu208, Arg217, 261–375, Glu328, and Arg337; these read LFGN…FLKE and ILSD…DPTK.

This sequence belongs to the cAMP-dependent kinase regulatory chain family. As to quaternary structure, tetramer, composed of 2 regulatory (R) and 2 catalytic (C) subunits. In the presence of cAMP it dissociates into 2 active monomeric C subunits and an R dimer.

This Yarrowia lipolytica (strain CLIB 122 / E 150) (Yeast) protein is cAMP-dependent protein kinase regulatory subunit (PKAR).